The chain runs to 404 residues: G1/S-specific cyclin-E2 (404 aa).

The tract at residues 1 to 44 (MSRRSSRLQAKQQPQPSQTESPQEAQIIQAKKRKTTQDVKKRRE) is disordered. Residues 12 to 26 (QQPQPSQTESPQEAQ) show a composition bias toward low complexity. Serine 21 is subject to Phosphoserine. Residues 35 to 44 (TTQDVKKRRE) show a composition bias toward basic and acidic residues. Position 348 is an N6-lactoyllysine (lysine 348). Residue serine 383 is modified to Phosphoserine. Position 392 is a phosphothreonine (threonine 392).

The protein belongs to the cyclin family. Cyclin E subfamily. In terms of assembly, interacts with the CDK2 (in vivo) and CDK3 (in vitro) protein kinases to form a serine/threonine kinase holoenzyme complex. The cyclin subunit imparts substrate specificity to the complex. Phosphorylation by CDK2 triggers its release from CDK2 and degradation via the ubiquitin proteasome pathway. In terms of processing, lactylated at Lys-348. Delactylated by SIRT3. According to PubMed:9858585, highest levels of expression in adult testis, thymus and brain. Lower levels in placenta, spleen and colon. Consistently elevated levels in tumor-derived cells compared to non-transformed proliferating cells. According to PubMed:9840927: low levels in thymus, prostate, brain, skeletal muscle, and kidney. Elevated levels in lung. According to PubMed:9840943 highly expressed in testis, placenta, thymus and brain. In a lesser extent in small intestine and colon.

It is found in the nucleus. Its function is as follows. Essential for the control of the cell cycle at the late G1 and early S phase. This Homo sapiens (Human) protein is G1/S-specific cyclin-E2 (CCNE2).